A 252-amino-acid chain; its full sequence is Imidazole glycerol phosphate synthase subunit HisF (252 aa).

Active-site residues include D11 and D130.

Belongs to the HisA/HisF family. As to quaternary structure, heterodimer of HisH and HisF.

It localises to the cytoplasm. The catalysed reaction is 5-[(5-phospho-1-deoxy-D-ribulos-1-ylimino)methylamino]-1-(5-phospho-beta-D-ribosyl)imidazole-4-carboxamide + L-glutamine = D-erythro-1-(imidazol-4-yl)glycerol 3-phosphate + 5-amino-1-(5-phospho-beta-D-ribosyl)imidazole-4-carboxamide + L-glutamate + H(+). It participates in amino-acid biosynthesis; L-histidine biosynthesis; L-histidine from 5-phospho-alpha-D-ribose 1-diphosphate: step 5/9. Functionally, IGPS catalyzes the conversion of PRFAR and glutamine to IGP, AICAR and glutamate. The HisF subunit catalyzes the cyclization activity that produces IGP and AICAR from PRFAR using the ammonia provided by the HisH subunit. This chain is Imidazole glycerol phosphate synthase subunit HisF, found in Bacillus pumilus (strain SAFR-032).